We begin with the raw amino-acid sequence, 876 residues long: AP-1 complex subunit gamma-1 (876 aa).

9 HEAT repeats span residues Asp97–Ala135, Glu136–Asp173, Phe248–Ser284, Ser308–Gln345, Ala346–Val382, Gln384–Pro417, Glu418–Glu454, Val506–Ser545, and Ser560–Asn599. Residues Pro756–Pro873 form the GAE domain.

The protein belongs to the adaptor complexes large subunit family. Adaptor protein complex 1 (AP-1) is a heterotetramer composed of two large adaptins (gamma-type subunit and beta-type subunit), a medium adaptin (mu-type subunit) and a small adaptin (sigma-type subunit). Binds to EPSIN1. Interacts with DRP2A/ADL6 (via C-terminus).

Its subcellular location is the golgi apparatus. It is found in the cytoplasmic vesicle. It localises to the clathrin-coated vesicle membrane. Functionally, subunit of clathrin-associated adaptor protein complex 1 that plays a role in protein sorting at the trans-Golgi network and early endosomes (TGN/EE). The AP complexes mediate both the recruitment of clathrin to membranes and the recognition of sorting signals within the cytosolic tails of transmembrane cargo molecules. The chain is AP-1 complex subunit gamma-1 (GAMMA-ADR) from Arabidopsis thaliana (Mouse-ear cress).